We begin with the raw amino-acid sequence, 398 residues long: MGFLKLLSTSLATLAVVNAGKLLTANDGDEVVPSSYIVVMNDGVSTAQFETHRNWAANVHARTRSLKGGESGPGKHFDINGMKGYSASFDDRTVKDIASDPTVKYVEPDMVVNATANVVQRNAPSWGLSRISSKKSGATDYVYDSTAGEGIVIYGVDTGIDIGHADFGGRAEWGTNTADNDDTDGNGHGTHTASTAAGSKFGVAKKASVVAVKVLGADGSGTNSQVIAGMDWAVKDSKSRGATGKSVMNMSLGGAYSRAMNDAAANVVRSGVFLSVAAGNEAQDASNSSPASAPNVCTIAASTNSDGSASFTNFGSVVDLYAPGKDITAAYPGGGSKTLSGTSMAAPHVAGAAAYLMALEGVTSDKACARIVELAISSISSAPSGTTSKLLYNGINAQ.

The N-terminal stretch at 1-19 is a signal peptide; the sequence is MGFLKLLSTSLATLAVVNA. Residues 20–115 constitute a propeptide, removed in mature form; the sequence is GKLLTANDGD…VEPDMVVNAT (96 aa). The Inhibitor I9 domain occupies 35-113; that stretch reads SYIVVMNDGV…KYVEPDMVVN (79 aa). N113 carries N-linked (GlcNAc...) asparagine glycosylation. The interval 124–134 is igE-binding; it reads PSWGLSRISSK. Positions 125-398 constitute a Peptidase S8 domain; that stretch reads SWGLSRISSK…KLLYNGINAQ (274 aa). The active-site Charge relay system is the D157. The igE-binding stretch occupies residues 163–170; sequence GHADFGGR. Residues 175–195 are disordered; the sequence is TNTADNDDTDGNGHGTHTAST. Catalysis depends on H188, which acts as the Charge relay system. The segment at 227–245 is igE-binding; the sequence is IAGMDWAVKDSKSRGATGK. N249 is a glycosylation site (N-linked (GlcNAc...) asparagine). The tract at residues 310 to 318 is igE-binding; that stretch reads SFTNFGSVV. S343 acts as the Charge relay system in catalysis.

Belongs to the peptidase S8 family.

It is found in the secreted. Inhibited by phenylmethanesulfonyl fluoride (PMSF) and diethyl pyrocarbonate (DEPC), but not by benzamidine. Its function is as follows. Serine protease that hydrolyzes casein, gelatin and human collagen type IV, but not elastin in vitro. Hydrolyzes OCLN of the human lung epithelial cells at 202-Gln-|-Ser-203 and Gln-211-|-Ile-212. The chain is Subtilisin-like serine protease EN45_076310 from Penicillium chrysogenum (Penicillium notatum).